A 967-amino-acid polypeptide reads, in one-letter code: uncharacterized protein (967 aa).

A signal peptide spans 1–29 (MKKKLKSVLIWFLIFTFNLSLGSFREVFA). BIG2 domains follow at residues 38 to 107 (TAIT…QDGS) and 133 to 190 (LPVG…VNDG).

This is an uncharacterized protein from Clostridium acetobutylicum (strain ATCC 824 / DSM 792 / JCM 1419 / IAM 19013 / LMG 5710 / NBRC 13948 / NRRL B-527 / VKM B-1787 / 2291 / W).